The sequence spans 159 residues: S-ribosylhomocysteine lyase (159 aa).

Fe cation contacts are provided by H53, H57, and C124.

This sequence belongs to the LuxS family. As to quaternary structure, homodimer. The cofactor is Fe cation.

It carries out the reaction S-(5-deoxy-D-ribos-5-yl)-L-homocysteine = (S)-4,5-dihydroxypentane-2,3-dione + L-homocysteine. Involved in the synthesis of autoinducer 2 (AI-2) which is secreted by bacteria and is used to communicate both the cell density and the metabolic potential of the environment. The regulation of gene expression in response to changes in cell density is called quorum sensing. Catalyzes the transformation of S-ribosylhomocysteine (RHC) to homocysteine (HC) and 4,5-dihydroxy-2,3-pentadione (DPD). In Porphyromonas gingivalis (strain ATCC 33277 / DSM 20709 / CIP 103683 / JCM 12257 / NCTC 11834 / 2561), this protein is S-ribosylhomocysteine lyase.